The primary structure comprises 177 residues: Large ribosomal subunit protein uL6 (177 aa).

This sequence belongs to the universal ribosomal protein uL6 family. In terms of assembly, part of the 50S ribosomal subunit.

Functionally, this protein binds to the 23S rRNA, and is important in its secondary structure. It is located near the subunit interface in the base of the L7/L12 stalk, and near the tRNA binding site of the peptidyltransferase center. The polypeptide is Large ribosomal subunit protein uL6 (Histophilus somni (strain 2336) (Haemophilus somnus)).